A 335-amino-acid polypeptide reads, in one-letter code: MKESIAVLGAGSWGTALAVLLAHKGFRVNLWARRPELATALRETGENKTYLPGVRLTGTIIPTADLPAAVKGAGLVVLSVPSHAVRSTARLLKPFLPKGTVVVNTAKGLELETKKRLSQVLVEEGLDRVAVLSGPSHAEEVGRGLPTTVVVAAADRETAEYVQDVFMDPTFRVYTNPDIIGVEFGGALKNIIALATGMADGLGLGDNTRAALMTRGMAEIARLGVALGGKVLTFAGLSGIGDLIVTCTSMYSRNRRAGILLGKGQSLEEVLDAVGMVVEGVRTTAAARELACQHGIKMPITEEIYQVLYKGKPVGDCVAALMERPRTHEVESGDW.

Residues Ser12, Trp13, Arg33, Arg34, and Lys107 each contribute to the NADPH site. Sn-glycerol 3-phosphate-binding residues include Lys107, Gly134, and Ser136. An NADPH-binding site is contributed by Ala138. Lys189, Asp242, Ser252, Arg253, and Asn254 together coordinate sn-glycerol 3-phosphate. The active-site Proton acceptor is the Lys189. NADPH is bound at residue Arg253. 2 residues coordinate NADPH: Val277 and Glu279.

Belongs to the NAD-dependent glycerol-3-phosphate dehydrogenase family.

Its subcellular location is the cytoplasm. The enzyme catalyses sn-glycerol 3-phosphate + NAD(+) = dihydroxyacetone phosphate + NADH + H(+). The catalysed reaction is sn-glycerol 3-phosphate + NADP(+) = dihydroxyacetone phosphate + NADPH + H(+). It participates in membrane lipid metabolism; glycerophospholipid metabolism. In terms of biological role, catalyzes the reduction of the glycolytic intermediate dihydroxyacetone phosphate (DHAP) to sn-glycerol 3-phosphate (G3P), the key precursor for phospholipid synthesis. The polypeptide is Glycerol-3-phosphate dehydrogenase [NAD(P)+] (Moorella thermoacetica (strain ATCC 39073 / JCM 9320)).